Reading from the N-terminus, the 1181-residue chain is Putative primase (1181 aa).

The interval 1141–1181 (RSHSTMVEHDMDDDESTNKKQELEEEDEECIDIDEYNNERF) is disordered. Over residues 1163-1181 (LEEEDEECIDIDEYNNERF) the composition is skewed to acidic residues.

The protein belongs to the eukaryotic-type primase small subunit family.

Functionally, synthesizes small RNA primers for the Okazaki fragments on both template strands at replication forks during viral DNA synthesis. This chain is Putative primase, found in Magallana gigas (Pacific oyster).